The following is a 238-amino-acid chain: UPF0758 protein Dtpsy_2777 (238 aa).

Residues 116–238 enclose the MPN domain; the sequence is VFDSPQAVQH…ALSMAEQGLV (123 aa). Zn(2+) contacts are provided by His-187, His-189, and Asp-200. Positions 187–200 match the JAMM motif motif; it reads HNHPSGSVQPSRAD.

It belongs to the UPF0758 family.

This chain is UPF0758 protein Dtpsy_2777, found in Acidovorax ebreus (strain TPSY) (Diaphorobacter sp. (strain TPSY)).